The primary structure comprises 530 residues: C2H2-type transcription factor MSN2 (530 aa).

2 C2H2-type zinc fingers span residues 409–437 (FVCD…QEKP) and 438–465 (FECN…SGGA).

Its subcellular location is the nucleus. The protein resides in the cytoplasm. Its function is as follows. Transcription factor that acts as a key downstream transcription factor in the HOG1-MAPK pathway. Plays crucial roles in the regulation of dimorphism transition, aggravated pigmentation, conidiation, microsclerotia formation and subsequent virulence towards Spodoptera litura larvae. More specifically regulates the expression of genes involved in antioxidation, pigment biosynthesis and ion transport and storage. This chain is C2H2-type transcription factor MSN2, found in Metarhizium rileyi (strain RCEF 4871) (Nomuraea rileyi).